The sequence spans 345 residues: Anthranilate phosphoribosyltransferase (345 aa).

Residues glycine 79, 82 to 83 (GD), threonine 87, 89 to 92 (NVST), 106 to 114 (KHGNRAVSG), and serine 118 contribute to the 5-phospho-alpha-D-ribose 1-diphosphate site. Position 79 (glycine 79) interacts with anthranilate. Serine 91 lines the Mg(2+) pocket. Asparagine 109 provides a ligand contact to anthranilate. Arginine 164 lines the anthranilate pocket. Residues aspartate 223 and glutamate 224 each contribute to the Mg(2+) site.

The protein belongs to the anthranilate phosphoribosyltransferase family. As to quaternary structure, homodimer. Mg(2+) serves as cofactor.

It catalyses the reaction N-(5-phospho-beta-D-ribosyl)anthranilate + diphosphate = 5-phospho-alpha-D-ribose 1-diphosphate + anthranilate. It functions in the pathway amino-acid biosynthesis; L-tryptophan biosynthesis; L-tryptophan from chorismate: step 2/5. In terms of biological role, catalyzes the transfer of the phosphoribosyl group of 5-phosphorylribose-1-pyrophosphate (PRPP) to anthranilate to yield N-(5'-phosphoribosyl)-anthranilate (PRA). The polypeptide is Anthranilate phosphoribosyltransferase (Saccharolobus islandicus (strain L.S.2.15 / Lassen #1) (Sulfolobus islandicus)).